The chain runs to 199 residues: Casparian strip membrane protein 2 (199 aa).

Residues 1–37 (MMRGSTEIDMPESSSVSKGTAPLIAAPMKEKGGYKKG) lie on the Cytoplasmic side of the membrane. The chain crosses the membrane as a helical span at residues 38–58 (IAIFDFILRLAAIATALAAAA). Residues 59-87 (SMGTSDETLPFFTQFFQFQASYDDLPTFQ) lie on the Extracellular side of the membrane. The chain crosses the membrane as a helical span at residues 88–108 (FFVIAMAIVAGYLVLSLPFSI). The Cytoplasmic segment spans residues 109–120 (VAIVRPHAAGPR). Residues 121-141 (LLLIILDTVALTLNTAAGAAA) traverse the membrane as a helical segment. At 142–173 (AAIVYLAHNGNSSTNWLAICQQFGDFCQKNSG) the chain is on the extracellular side. A glycan (N-linked (GlcNAc...) asparagine) is linked at N152. A helical membrane pass occupies residues 174 to 194 (AVVASFITVVIFVFLLVLSAF). At 195-199 (ALRRH) the chain is on the cytoplasmic side.

It belongs to the Casparian strip membrane proteins (CASP) family. In terms of assembly, homodimer and heterodimers.

The protein resides in the cell membrane. Its function is as follows. Regulates membrane-cell wall junctions and localized cell wall deposition. Required for establishment of the Casparian strip membrane domain (CSD) and the subsequent formation of Casparian strips, a cell wall modification of the root endodermis that determines an apoplastic barrier between the intraorganismal apoplasm and the extraorganismal apoplasm and prevents lateral diffusion. In Populus trichocarpa (Western balsam poplar), this protein is Casparian strip membrane protein 2.